The following is a 167-amino-acid chain: Aphrodisin (167 aa).

The N-terminal stretch at 1-16 (MVKILVLALVFSLAHA) is a signal peptide. The residue at position 17 (Gln-17) is a Pyrrolidone carboxylic acid. Intrachain disulfides connect Cys-54/Cys-58 and Cys-73/Cys-165. Asn-57 and Asn-85 each carry an N-linked (GlcNAc...) asparagine glycan.

Belongs to the calycin superfamily. Lipocalin family. Expressed in the vagina, uterus, and Bartholin's glands of female hamsters. Secreted in vaginal discharge.

It localises to the secreted. In terms of biological role, acts as an aphrodisiac pheromone, reliably eliciting copulatory behavior from male hamster. In Mesocricetus auratus (Golden hamster), this protein is Aphrodisin.